The chain runs to 518 residues: MAPKISISLNPPYNGEFYSSNDQMSGIVSLQLTKALSIRKISVILKGFSETLTKIDQEYMFQQNGMMMPGQDNKSFHTLMKFEQRVFPPDNVWNALDGSSKPFKVKPGSYNYSFQFDKFPRKPECLKNHTAKTVAFVTRNNARLPPTFNSHWQEFNKIDNLDLYFYSFGKVIYMVQVQIELGKSSSWFKPFHKLIREIETFEFIPEPKDLIVEPDEDDNEELNAFSNNSRGNSLVTNNEFFNSSNLKVPSKDVKVVNGVGYIKSDRNFSQANSILIENGDIRSRPVSSVTSTRQSTRLVNGMKVFPSTYKMGLPDGESNMRIEVRSRDLKQIYRKDYLFRSGSQNFDKVYVVMEGNIASLSKMQITPLKLQLNLLETTTYLSQGIANGNYSSLKLIEIDLNQLKSNKPLLDLNEIRENFDGSMFECELRLKDHPILRKLVFNEEDYRHRGNRLYSFKTCTIKRIFSLQLLIEWGINGIRKQSEVNIDPVQIFCQVREHVEAEALPRYVPPPTYTEMAS.

A Glycyl lysine isopeptide (Lys-Gly) (interchain with G-Cter in ubiquitin) cross-link involves residue K118.

The protein belongs to the ART10 family. In terms of assembly, interacts with RSP5. In terms of processing, ubiquitinated by RSP5.

It localises to the cytoplasm. Functionally, may regulate endocytosis by recruiting RSP5 ubiquitin ligase activity to specific plasma membrane proteins in response to extracellular stimuli. The chain is Arrestin-related trafficking adapter 10 (ART10) from Saccharomyces cerevisiae (strain RM11-1a) (Baker's yeast).